We begin with the raw amino-acid sequence, 274 residues long: Nitrogenase iron protein (274 aa).

8 to 15 serves as a coordination point for ATP; sequence GKGGIGKS. C94 lines the [4Fe-4S] cluster pocket. R97 carries the ADP-ribosylarginine; by dinitrogenase reductase ADP-ribosyltransferase modification. [4Fe-4S] cluster is bound at residue C131.

The protein belongs to the NifH/BchL/ChlL family. In terms of assembly, homodimer. Requires [4Fe-4S] cluster as cofactor. The reversible ADP-ribosylation of Arg-97 inactivates the nitrogenase reductase and regulates nitrogenase activity.

It carries out the reaction N2 + 8 reduced [2Fe-2S]-[ferredoxin] + 16 ATP + 16 H2O = H2 + 8 oxidized [2Fe-2S]-[ferredoxin] + 2 NH4(+) + 16 ADP + 16 phosphate + 6 H(+). Its function is as follows. The key enzymatic reactions in nitrogen fixation are catalyzed by the nitrogenase complex, which has 2 components: the iron protein and the molybdenum-iron protein. The sequence is that of Nitrogenase iron protein from Azobacteroides pseudotrichonymphae genomovar. CFP2.